The following is a 570-amino-acid chain: Aspartyl aminopeptidase (570 aa).

Position 86 (His86) interacts with Zn(2+). Position 160 (His160) interacts with substrate. Asp324 serves as a coordination point for Zn(2+). Glu379 is a binding site for substrate. Residues Glu380 and Asp434 each contribute to the Zn(2+) site. Substrate contacts are provided by Asp434, His437, Lys462, and Tyr469. His534 contacts Zn(2+).

This sequence belongs to the peptidase M18 family. Homododecamer composed of homodimers and homotrimers that assemble into a tetrahedron shape to create a central tunnel containing the active sites. Homooctamer. Requires Zn(2+) as cofactor.

It is found in the cytoplasm. It catalyses the reaction Release of an N-terminal aspartate or glutamate from a peptide, with a preference for aspartate.. Its activity is regulated as follows. Activated by Co(2+). Inhibited by high concentrations (&gt;1mM) of Zn(2+). In terms of biological role, aminopeptidase which specifically catalyzes the removal of glutamic acid or aspartic acid residues from the N-terminus of peptides. May play a role in the final step of host hemoglobin catabolism, by cleaving hemoglobin-derived oligopeptides in the cytoplasm. This Plasmodium falciparum (isolate 3D7) protein is Aspartyl aminopeptidase.